We begin with the raw amino-acid sequence, 426 residues long: MIDPQTLRDHPDLVIASQELRGASVEVVDQAVAADSERRQAITEFEGLRAEQNAHGKLVAKADKADKPRLIAEVQELKARVTAAQERAQQAEAALDEAMRRIPNIVIDGVPAGGEDDWALLREVGEKAAFDFEPRDHLEIGEILDAIDMGRGAKVSGARFHFLKGIGARLEIALMNFGLARALEAGLVPLITPTLVKPEIMAGTGFLGAHADEVYHLDDDDLYLTGTSEVALAGYHADEILDLAAGPIRYAGWSTCYRKEAGSYGKDTRGIIRVHQFQKLEMFSYVDPADAEAEHERLLAMQERMMQDLGLAYRVIDTAAGDLGSSAARKYDVEAWIPTQGAYRELTSTSNCTTFQARRLGTRFRGEDGRTSPVATLNGTLATTRWIVAILETHQRADGSVRVPEALRPYLGGLEVLEPATAKAAR.

227–229 is an L-serine binding site; it reads TSE. ATP contacts are provided by residues 258 to 260 and Val-274; that span reads RKE. Residue Glu-281 participates in L-serine binding. 345–348 is a binding site for ATP; sequence ELTS. Thr-380 is an L-serine binding site.

The protein belongs to the class-II aminoacyl-tRNA synthetase family. Type-1 seryl-tRNA synthetase subfamily. As to quaternary structure, homodimer. The tRNA molecule binds across the dimer.

It is found in the cytoplasm. It catalyses the reaction tRNA(Ser) + L-serine + ATP = L-seryl-tRNA(Ser) + AMP + diphosphate + H(+). The catalysed reaction is tRNA(Sec) + L-serine + ATP = L-seryl-tRNA(Sec) + AMP + diphosphate + H(+). The protein operates within aminoacyl-tRNA biosynthesis; selenocysteinyl-tRNA(Sec) biosynthesis; L-seryl-tRNA(Sec) from L-serine and tRNA(Sec): step 1/1. Its function is as follows. Catalyzes the attachment of serine to tRNA(Ser). Is also able to aminoacylate tRNA(Sec) with serine, to form the misacylated tRNA L-seryl-tRNA(Sec), which will be further converted into selenocysteinyl-tRNA(Sec). The sequence is that of Serine--tRNA ligase from Clavibacter sepedonicus (Clavibacter michiganensis subsp. sepedonicus).